Here is a 364-residue protein sequence, read N- to C-terminus: Fructose-bisphosphate aldolase B (364 aa).

A2 carries the N-acetylalanine modification. An N6-succinyllysine modification is found at K13. The residue at position 36 (S36) is a Phosphoserine. Phosphothreonine is present on T39. Position 43 (R43) interacts with beta-D-fructose 1,6-bisphosphate. Residue S89 is modified to Phosphoserine. A Phosphothreonine modification is found at T119. An N6-succinyllysine modification is found at K121. Residue S132 is modified to Phosphoserine. Residue E188 is the Proton acceptor of the active site. K230 acts as the Schiff-base intermediate with dihydroxyacetone-P in catalysis. Phosphoserine is present on residues S272, S276, S299, and S301. A beta-D-fructose 1,6-bisphosphate-binding site is contributed by 272 to 274 (SGG). R304 contributes to the beta-D-fructose 1,6-bisphosphate binding site. A Phosphoserine modification is found at S309. N6-succinyllysine is present on K317.

Belongs to the class I fructose-bisphosphate aldolase family. Homotetramer. Interacts with BBS1, BBS2, BBS4 and BBS7. Forms a ternary complex with G6PD and TP53; this interaction is direct.

Its subcellular location is the cytoplasm. The protein localises to the cytosol. The protein resides in the cytoskeleton. It localises to the microtubule organizing center. It is found in the centrosome. Its subcellular location is the centriolar satellite. The enzyme catalyses beta-D-fructose 1,6-bisphosphate = D-glyceraldehyde 3-phosphate + dihydroxyacetone phosphate. The catalysed reaction is beta-D-fructose 1-phosphate = D-glyceraldehyde + dihydroxyacetone phosphate. The protein operates within carbohydrate degradation; glycolysis; D-glyceraldehyde 3-phosphate and glycerone phosphate from D-glucose: step 4/4. It participates in carbohydrate biosynthesis; gluconeogenesis. Its pathway is carbohydrate metabolism; fructose metabolism. In terms of biological role, catalyzes the aldol cleavage of fructose 1,6-biphosphate to form two triosephosphates dihydroxyacetone phosphate and D-glyceraldehyde 3-phosphate in glycolysis as well as the reverse stereospecific aldol addition reaction in gluconeogenesis. In fructolysis, metabolizes fructose 1-phosphate derived from the phosphorylation of dietary fructose by fructokinase into dihydroxyacetone phosphate and D-glyceraldehyde. Acts as an adapter independently of its enzymatic activity, exerts a tumor suppressor role by stabilizing the ternary complex with G6PD and TP53 to inhibit G6PD activity and keep oxidative pentose phosphate metabolism in check. This is Fructose-bisphosphate aldolase B (Aldob) from Rattus norvegicus (Rat).